We begin with the raw amino-acid sequence, 198 residues long: Na(+)-translocating NADH-quinone reductase subunit E (198 aa).

A run of 6 helical transmembrane segments spans residues 11–31 (SIFI…FLAV), 39–59 (FGLG…NNLV), 77–97 (FLNF…LEMI), 110–130 (GIFL…SFMV), 140–160 (VVYG…LAGI), and 176–196 (LGIT…FSGV).

This sequence belongs to the NqrDE/RnfAE family. As to quaternary structure, composed of six subunits; NqrA, NqrB, NqrC, NqrD, NqrE and NqrF.

It localises to the cell inner membrane. The catalysed reaction is a ubiquinone + n Na(+)(in) + NADH + H(+) = a ubiquinol + n Na(+)(out) + NAD(+). Functionally, NQR complex catalyzes the reduction of ubiquinone-1 to ubiquinol by two successive reactions, coupled with the transport of Na(+) ions from the cytoplasm to the periplasm. NqrA to NqrE are probably involved in the second step, the conversion of ubisemiquinone to ubiquinol. This is Na(+)-translocating NADH-quinone reductase subunit E from Vibrio anguillarum (Listonella anguillarum).